A 339-amino-acid chain; its full sequence is Serpentine receptor class gamma-7 (339 aa).

Transmembrane regions (helical) follow at residues 30 to 50 (YWIQ…IIIT), 65 to 85 (WILT…LFVV), 98 to 118 (FSTI…IYNY), 152 to 172 (IPLF…NTVI), 200 to 220 (LHLT…LLLM), 239 to 259 (SIFI…YAFF), and 268 to 288 (FLVD…PLIF). Positions 319–339 (PFNNTMPRQESPSPNYDSILA) are disordered.

The protein belongs to the nematode receptor-like protein srg family.

The protein localises to the membrane. This Caenorhabditis elegans protein is Serpentine receptor class gamma-7 (srg-7).